Here is a 375-residue protein sequence, read N- to C-terminus: Digeranylgeranylglycerophospholipid reductase 1 (375 aa).

Residues Ala-13, Glu-32, Cys-43, Ala-44, Gly-46, Arg-92, Ala-116, Asp-275, Gly-287, and Leu-288 each coordinate FAD. Residue Gly-367 coordinates a 2,3-bis-O-(geranylgeranyl)-sn-glycerol 1-phospholipid.

Belongs to the geranylgeranyl reductase family. DGGGPL reductase subfamily. The cofactor is FAD.

It carries out the reaction a 2,3-bis-O-phytanyl-sn-glycerol 1-phospholipid + 8 A = a 2,3-bis-O-(geranylgeranyl)-sn-glycerol 1-phospholipid + 8 AH2. It catalyses the reaction 2,3-bis-O-(phytanyl)-sn-glycerol 1-phosphate + 8 A = 2,3-bis-O-(geranylgeranyl)-sn-glycerol 1-phosphate + 8 AH2. The enzyme catalyses CDP-2,3-bis-O-(geranylgeranyl)-sn-glycerol + 8 AH2 = CDP-2,3-bis-O-(phytanyl)-sn-glycerol + 8 A. The catalysed reaction is archaetidylserine + 8 AH2 = 2,3-bis-O-phytanyl-sn-glycero-3-phospho-L-serine + 8 A. The protein operates within membrane lipid metabolism; glycerophospholipid metabolism. Functionally, is involved in the reduction of 2,3-digeranylgeranylglycerophospholipids (unsaturated archaeols) into 2,3-diphytanylglycerophospholipids (saturated archaeols) in the biosynthesis of archaeal membrane lipids. Catalyzes the formation of archaetidic acid (2,3-di-O-phytanyl-sn-glyceryl phosphate) from 2,3-di-O-geranylgeranylglyceryl phosphate (DGGGP) via the hydrogenation of each double bond of the isoprenoid chains. Is also probably able to reduce double bonds of geranyl groups in CDP-2,3-bis-O-(geranylgeranyl)-sn-glycerol and archaetidylserine, thus acting at various stages in the biosynthesis of archaeal membrane lipids. In Methanopyrus kandleri (strain AV19 / DSM 6324 / JCM 9639 / NBRC 100938), this protein is Digeranylgeranylglycerophospholipid reductase 1.